The primary structure comprises 305 residues: GMP synthase [glutamine-hydrolyzing] subunit B (305 aa).

Residues 2–185 (VEPTAFIDEK…LDLESIIAER (184 aa)) form the GMPS ATP-PPase domain. 29-35 (SGGVDSS) is a binding site for ATP.

In terms of assembly, heterodimer composed of a glutamine amidotransferase subunit (A) and a GMP-binding subunit (B).

The enzyme catalyses XMP + L-glutamine + ATP + H2O = GMP + L-glutamate + AMP + diphosphate + 2 H(+). Its pathway is purine metabolism; GMP biosynthesis; GMP from XMP (L-Gln route): step 1/1. Catalyzes the synthesis of GMP from XMP. The protein is GMP synthase [glutamine-hydrolyzing] subunit B of Natronomonas pharaonis (strain ATCC 35678 / DSM 2160 / CIP 103997 / JCM 8858 / NBRC 14720 / NCIMB 2260 / Gabara) (Halobacterium pharaonis).